The primary structure comprises 467 residues: Calcium-binding protein P (467 aa).

Composition is skewed to pro residues over residues 1–10 and 45–62; these read MQNPQNPPPA and QYPP…PPYP. The segment at 1–311 is disordered; the sequence is MQNPQNPPPA…GAYPGQPPMG (311 aa). The XYPPX signature appears at 45-49; that stretch reads QYPPQ. The segment covering 63-74 has biased composition (low complexity); the sequence is GTQQPGAPGAPG. 17 consecutive short sequence motifs (XYPPX) follow at residues 75–79, 83–87, 94–98, 104–108, 115–119, 125–129, 136–140, 146–150, 157–161, 165–169, 176–180, 187–191, 221–225, 238–242, 247–251, 256–260, and 275–279; these read QYPPQ, GYPPQ, AYPPQ, and GVPPQ. 2 stretches are compositionally biased toward pro residues: residues 75–109 and 118–131; these read QYPP…PPQQ and PQQP…PQQP. The span at 132–145 shows a compositional bias: low complexity; sequence GAPGQYPPQQGQPG. 2 stretches are compositionally biased toward low complexity: residues 153 to 193 and 215 to 246; these read GQPG…PQQG and AYPG…GQPG. Low complexity predominate over residues 253–311; the sequence is QPGAYPPQQQQVAYPGQQPPMGAYPPQQGAYPGQQGAYPGQQGAYPGQQGAYPGQPPMG. 2 EF-hand domains span residues 399-434 and 435-467; these read QKMM…LGYY and FSKG…WSMQ. Residues D412, N414, S416, T418, and E423 each contribute to the Ca(2+) site.

This is Calcium-binding protein P (cbpP) from Dictyostelium discoideum (Social amoeba).